Reading from the N-terminus, the 751-residue chain is Valine--tRNA ligase (751 aa).

Residue K520 participates in ATP binding.

The protein belongs to the class-I aminoacyl-tRNA synthetase family. ValS type 2 subfamily.

The protein resides in the cytoplasm. It catalyses the reaction tRNA(Val) + L-valine + ATP = L-valyl-tRNA(Val) + AMP + diphosphate. In terms of biological role, catalyzes the attachment of valine to tRNA(Val). As ValRS can inadvertently accommodate and process structurally similar amino acids such as threonine, to avoid such errors, it has a 'posttransfer' editing activity that hydrolyzes mischarged Thr-tRNA(Val) in a tRNA-dependent manner. This chain is Valine--tRNA ligase (valS), found in Nanoarchaeum equitans (strain Kin4-M).